Here is a 208-residue protein sequence, read N- to C-terminus: uncharacterized protein (208 aa).

4Fe-4S ferredoxin-type domains follow at residues 59-88, 114-145, 147-176, and 174-203; these read GVLV…SVGT, GDLN…WQQK, GCIT…VNTE, and NTES…IIEW. Positions 68, 71, 74, 78, 123, 126, 131, 135, 156, 159, 162, 166, 183, 186, 189, and 193 each coordinate [4Fe-4S] cluster.

This is an uncharacterized protein from Escherichia coli O157:H7.